The sequence spans 488 residues: (Z)-2-((N-methylformamido)methylene)-5-hydroxybutyrolactone dehydrogenase (488 aa).

Residues 149–150 and 226–227 each bind NAD(+); these read WN and GG. Glutamate 248 (proton acceptor) is an active-site residue. NAD(+) is bound at residue leucine 249. Cysteine 282 serves as the catalytic Nucleophile. An NAD(+)-binding site is contributed by glutamate 380.

The protein belongs to the aldehyde dehydrogenase family. As to quaternary structure, homodimer.

The enzyme catalyses (Z)-2-((N-methylformamido)methylene)-5-hydroxybutanolactone + NAD(+) + H2O = (E)-2-((N-methylformamido) methylene)succinate + NADH + 3 H(+). Involved in the degradation of the pyridine ring of trigonelline (TG; N-methylnicotinate) into succinate and methylamine as carbon and nitrogen sources, respectively. Catalyzes the NAD(+)-dependent oxidation of (Z)-2-((N-methylformamido)methylene)-5-hydroxybutyrolactone (MFMB) to yield (E)-2-((N-methylformamido)methylene)succinate (MFMS). The polypeptide is (Z)-2-((N-methylformamido)methylene)-5-hydroxybutyrolactone dehydrogenase (Acinetobacter baylyi (strain ATCC 33305 / BD413 / ADP1)).